Here is a 258-residue protein sequence, read N- to C-terminus: Capsid protein (258 aa).

Positions Lys3–Arg20 match the Bipartite nuclear localization signal motif. A Nuclear localization signal motif is present at residues Arg41–Met55. A zinc finger spans residues Cys69–His86. The Nuclear export signal motif lies at Leu102–Met123. A Bipartite nuclear localization signal motif is present at residues Lys202–Arg249.

It belongs to the geminiviridae capsid protein family. Homomultimer. Binds to single-stranded and double-stranded viral DNA. Interacts (via nuclear localization signals) with host importin alpha-1a.

The protein resides in the virion. It is found in the host nucleus. Functionally, encapsidates the viral DNA into characteristic twinned ('geminate') particles. Binds the genomic viral ssDNA and shuttles it into and out of the cell nucleus. The CP of bipartite geminiviruses is not required for cell-to-cell or systemic movement. In Hewittia sublobata (Coralbush), this protein is Capsid protein.